The chain runs to 490 residues: Acetyl-coenzyme A carboxylase carboxyl transferase subunit beta, chloroplastic (490 aa).

A disordered region spans residues 184-203 (LNSSENEGSSRRTRTKGSDL). The CoA carboxyltransferase N-terminal domain maps to 221–490 (LWVQCENCYG…PLNQKSSKIK (270 aa)). Residues Cys-225, Cys-228, Cys-244, and Cys-247 each coordinate Zn(2+). Residues 225–247 (CENCYGLNYKKFLKSKMNICEQC) form a C4-type zinc finger.

The protein belongs to the AccD/PCCB family. Acetyl-CoA carboxylase is a heterohexamer composed of biotin carboxyl carrier protein, biotin carboxylase and 2 subunits each of ACCase subunit alpha and ACCase plastid-coded subunit beta (accD). It depends on Zn(2+) as a cofactor. RNA expressed in leaf, root, stem, and tuber; the least expression occurs in stems. RNA persists even in senescent leaves.

The protein resides in the plastid. Its subcellular location is the chloroplast stroma. It catalyses the reaction N(6)-carboxybiotinyl-L-lysyl-[protein] + acetyl-CoA = N(6)-biotinyl-L-lysyl-[protein] + malonyl-CoA. It functions in the pathway lipid metabolism; malonyl-CoA biosynthesis; malonyl-CoA from acetyl-CoA: step 1/1. Functionally, component of the acetyl coenzyme A carboxylase (ACC) complex. Biotin carboxylase (BC) catalyzes the carboxylation of biotin on its carrier protein (BCCP) and then the CO(2) group is transferred by the transcarboxylase to acetyl-CoA to form malonyl-CoA. The protein is Acetyl-coenzyme A carboxylase carboxyl transferase subunit beta, chloroplastic of Solanum tuberosum (Potato).